Reading from the N-terminus, the 456-residue chain is UDP-N-acetylglucosamine 1-carboxyvinyltransferase (456 aa).

34–35 (KN) contributes to the phosphoenolpyruvate binding site. Arg104 lines the UDP-N-acetyl-alpha-D-glucosamine pocket. The active-site Proton donor is the Cys128. 2-(S-cysteinyl)pyruvic acid O-phosphothioketal is present on Cys128. Positions 319 and 341 each coordinate UDP-N-acetyl-alpha-D-glucosamine.

The protein belongs to the EPSP synthase family. MurA subfamily.

The protein localises to the cytoplasm. The catalysed reaction is phosphoenolpyruvate + UDP-N-acetyl-alpha-D-glucosamine = UDP-N-acetyl-3-O-(1-carboxyvinyl)-alpha-D-glucosamine + phosphate. The protein operates within cell wall biogenesis; peptidoglycan biosynthesis. Its function is as follows. Cell wall formation. Adds enolpyruvyl to UDP-N-acetylglucosamine. In Prochlorococcus marinus (strain MIT 9312), this protein is UDP-N-acetylglucosamine 1-carboxyvinyltransferase.